A 213-amino-acid chain; its full sequence is StAR-related lipid transfer protein 5 (213 aa).

The region spanning 1–213 is the START domain; it reads MDPSWATQES…LQKAVRKFHH (213 aa).

As to expression, expressed in most tissues, with highest levels in liver and in kidney.

Functionally, may be involved in the intracellular transport of sterols or other lipids. May bind cholesterol or other sterols. The chain is StAR-related lipid transfer protein 5 (Stard5) from Mus musculus (Mouse).